The primary structure comprises 179 residues: Ribosome maturation factor RimM (179 aa).

Residues 99–174 form the PRC barrel domain; it reads EEDEYYFDQI…IMIVDLPEGL (76 aa).

The protein belongs to the RimM family. Binds ribosomal protein uS19.

The protein resides in the cytoplasm. Functionally, an accessory protein needed during the final step in the assembly of 30S ribosomal subunit, possibly for assembly of the head region. Essential for efficient processing of 16S rRNA. May be needed both before and after RbfA during the maturation of 16S rRNA. It has affinity for free ribosomal 30S subunits but not for 70S ribosomes. This chain is Ribosome maturation factor RimM, found in Natranaerobius thermophilus (strain ATCC BAA-1301 / DSM 18059 / JW/NM-WN-LF).